Here is a 37-residue protein sequence, read N- to C-terminus: Large ribosomal subunit protein bL36 (37 aa).

It belongs to the bacterial ribosomal protein bL36 family.

The polypeptide is Large ribosomal subunit protein bL36 (Leptospira interrogans serogroup Icterohaemorrhagiae serovar copenhageni (strain Fiocruz L1-130)).